The following is a 166-amino-acid chain: NADH-quinone oxidoreductase subunit I (166 aa).

4Fe-4S ferredoxin-type domains lie at Leu57 to Glu87 and Thr97 to Ile126. 8 residues coordinate [4Fe-4S] cluster: Cys67, Cys70, Cys73, Cys77, Cys106, Cys109, Cys112, and Cys116.

It belongs to the complex I 23 kDa subunit family. In terms of assembly, NDH-1 is composed of 14 different subunits. Subunits NuoA, H, J, K, L, M, N constitute the membrane sector of the complex. It depends on [4Fe-4S] cluster as a cofactor.

It is found in the cell inner membrane. The enzyme catalyses a quinone + NADH + 5 H(+)(in) = a quinol + NAD(+) + 4 H(+)(out). In terms of biological role, NDH-1 shuttles electrons from NADH, via FMN and iron-sulfur (Fe-S) centers, to quinones in the respiratory chain. The immediate electron acceptor for the enzyme in this species is believed to be ubiquinone. Couples the redox reaction to proton translocation (for every two electrons transferred, four hydrogen ions are translocated across the cytoplasmic membrane), and thus conserves the redox energy in a proton gradient. This is NADH-quinone oxidoreductase subunit I from Legionella pneumophila (strain Paris).